Reading from the N-terminus, the 333-residue chain is 4-hydroxyproline epimerase (333 aa).

C90 (proton acceptor) is an active-site residue. Substrate contacts are provided by residues 91-92 and D249; that span reads GH. Catalysis depends on C253, which acts as the Proton donor. Residue 254-255 participates in substrate binding; that stretch reads GT.

It belongs to the proline racemase family. In terms of assembly, homodimer.

It catalyses the reaction trans-4-hydroxy-L-proline = cis-4-hydroxy-D-proline. In terms of biological role, allows intracellular utilization of 4-hydroxyproline, one of the major constituents of host collagen, by converting 4-hydroxy-L-proline to 4-hydroxy-D-proline, which can be further metabolized by intracellular 4-hydroxy-D-proline oxidases. Strong B-cell mitogen. Plays an important role in the regulation of intra- and extracellular amino acid pools, allowing the bacterium to profit from host precursors and enzymatic pathways. The chain is 4-hydroxyproline epimerase from Brucella suis (strain ATCC 23445 / NCTC 10510).